The following is a 63-amino-acid chain: Megourin-1 (63 aa).

As to quaternary structure, monomer. Post-translationally, contains four disulfide bonds.

The protein resides in the secreted. In terms of biological role, has antimicrobial activity against Gram-positive bacteria and fungi. This Megoura viciae (Vetch aphid) protein is Megourin-1.